The following is a 133-amino-acid chain: ATP synthase epsilon chain, chloroplastic (133 aa).

Belongs to the ATPase epsilon chain family. In terms of assembly, F-type ATPases have 2 components, CF(1) - the catalytic core - and CF(0) - the membrane proton channel. CF(1) has five subunits: alpha(3), beta(3), gamma(1), delta(1), epsilon(1). CF(0) has three main subunits: a, b and c.

It localises to the plastid. Its subcellular location is the chloroplast thylakoid membrane. Produces ATP from ADP in the presence of a proton gradient across the membrane. This Helianthus annuus (Common sunflower) protein is ATP synthase epsilon chain, chloroplastic.